A 131-amino-acid polypeptide reads, in one-letter code: Cytochrome b5 (131 aa).

A Cytochrome b5 heme-binding domain is found at 3–79 (AKIFSLDEVS…LEEYLIGSLD (77 aa)). H38 and H62 together coordinate heme. Residues 108 to 125 (IILPALAIIGALVYKYVI) form a helical membrane-spanning segment.

It belongs to the cytochrome b5 family.

The protein resides in the endoplasmic reticulum membrane. Its subcellular location is the microsome membrane. Functionally, membrane bound hemoprotein which function as an electron carrier for several membrane bound oxygenases. In Rhizopus stolonifer (Rhizopus nigricans), this protein is Cytochrome b5.